Here is a 128-residue protein sequence, read N- to C-terminus: Large ribosomal subunit protein bL17 (128 aa).

The protein belongs to the bacterial ribosomal protein bL17 family. As to quaternary structure, part of the 50S ribosomal subunit. Contacts protein L32.

In Erwinia tasmaniensis (strain DSM 17950 / CFBP 7177 / CIP 109463 / NCPPB 4357 / Et1/99), this protein is Large ribosomal subunit protein bL17.